The following is a 192-amino-acid chain: dTTP/UTP pyrophosphatase (192 aa).

The active-site Proton acceptor is the D72.

It belongs to the Maf family. YhdE subfamily. A divalent metal cation is required as a cofactor.

The protein localises to the cytoplasm. The enzyme catalyses dTTP + H2O = dTMP + diphosphate + H(+). It carries out the reaction UTP + H2O = UMP + diphosphate + H(+). Functionally, nucleoside triphosphate pyrophosphatase that hydrolyzes dTTP and UTP. May have a dual role in cell division arrest and in preventing the incorporation of modified nucleotides into cellular nucleic acids. This chain is dTTP/UTP pyrophosphatase, found in Hydrogenovibrio crunogenus (strain DSM 25203 / XCL-2) (Thiomicrospira crunogena).